A 121-amino-acid chain; its full sequence is Large ribosomal subunit protein uL18 (121 aa).

This sequence belongs to the universal ribosomal protein uL18 family. In terms of assembly, part of the 50S ribosomal subunit; part of the 5S rRNA/L5/L18/L25 subcomplex. Contacts the 5S and 23S rRNAs.

This is one of the proteins that bind and probably mediate the attachment of the 5S RNA into the large ribosomal subunit, where it forms part of the central protuberance. The sequence is that of Large ribosomal subunit protein uL18 from Burkholderia ambifaria (strain MC40-6).